The primary structure comprises 386 residues: Patatin-14 (386 aa).

An N-terminal signal peptide occupies residues 1–23 (MATTKSFLILFFMILATTSSTCA). One can recognise a PNPLA domain in the interval 32–229 (LSIDGGGIKG…TVGDPALLSL (198 aa)). The short motif at 36-41 (GGGIKG) is the GXGXXG element. The GXSXG motif lies at 75 to 79 (GTSTG). Ser77 acts as the Nucleophile in catalysis. Asn115 is a glycosylation site (N-linked (GlcNAc...) asparagine). Asp215 acts as the Proton acceptor in catalysis. The DGA/G signature appears at 215–217 (DGG). Residues 321–381 (ENALTGTTTE…LLSDRKKLRA (61 aa)) adopt a coiled-coil conformation.

It belongs to the patatin family. As to expression, tuber.

Its subcellular location is the vacuole. Its function is as follows. Probable lipolytic acyl hydrolase (LAH), an activity which is thought to be involved in the response of tubers to pathogens. In Solanum tuberosum (Potato), this protein is Patatin-14.